The primary structure comprises 149 residues: UPF0260 protein PSPPH_1551 (149 aa).

Belongs to the UPF0260 family.

The chain is UPF0260 protein PSPPH_1551 from Pseudomonas savastanoi pv. phaseolicola (strain 1448A / Race 6) (Pseudomonas syringae pv. phaseolicola (strain 1448A / Race 6)).